The primary structure comprises 358 residues: MSQLIATKRVDLLAPYLALDQGSRVQAEYIWIDAEGGIRSKTMTLDKAPSSVADLKEWNFDGSSTNQAPADNSDVFLRPVAIFKDPFRGGANILVLCECYDNDGTPNKSNYRAHCKKVMDAAKDTEPWFGLEQEYTLFDADGQVFGWPKNGFPGPQGPYYCGVGAGKVFARDFIEAHYRACLYAGIKISGINAEVMPSQWEFQVGPCTGIEMGDHLWMARFLLLRIGEEWGITPSLHPKPLKGDWNGAGCHSNYSTKDMRTPGKGMAAIEDAIKKLEKKHLEHIAVYGEDNDLRLTGKHETASMTTFSAGVANRGASIRIPRHVGAQGYGYLEDRRPASNVDPYRVTAILVETTVLNN.

In terms of domain architecture, GS beta-grasp spans 25–104 (VQAEYIWIDA…VLCECYDNDG (80 aa)). The region spanning 111 to 358 (YRAHCKKVMD…ILVETTVLNN (248 aa)) is the GS catalytic domain.

This sequence belongs to the glutamine synthetase family. In terms of assembly, homooctamer.

It localises to the cytoplasm. It carries out the reaction L-glutamate + NH4(+) + ATP = L-glutamine + ADP + phosphate + H(+). The sequence is that of Glutamine synthetase (GLN1) from Cryptococcus neoformans var. neoformans serotype D (strain B-3501A) (Filobasidiella neoformans).